The chain runs to 144 residues: Maximins z/Hv (144 aa).

The first 18 residues, 1-18 (MNFKYIVAVSFLIASGYA), serve as a signal peptide directing secretion. Residues 19–43 (RSEENDVQSLSQREVLEEESLREIR) constitute a propeptide that is removed on maturation. At N70 the chain carries Asparagine amide. A propeptide spanning residues 74 to 123 (TAEDHEVMKRLKAVMRDLDSLDHPEEASERETRGFNQEEIANLFTKKEKR) is cleaved from the precursor. Isoleucine amide is present on I143.

This sequence belongs to the bombinin family. Expressed by the skin glands.

It is found in the secreted. Maximin-z shows antimicrobial activity against bacteria and against the fungus C.albicans. It has little hemolytic activity. In terms of biological role, maximin-Hv shows antimicrobial activity against bacteria and against the fungus C.albicans. Shows strong hemolytic activity. This is Maximins z/Hv from Bombina maxima (Giant fire-bellied toad).